A 99-amino-acid polypeptide reads, in one-letter code: Plastocyanin (99 aa).

In terms of domain architecture, Plastocyanin-like spans isoleucine 1 to glutamine 99. Cu cation is bound by residues histidine 37, cysteine 84, histidine 87, and methionine 92.

Belongs to the plastocyanin family. It depends on Cu(2+) as a cofactor.

The protein resides in the plastid. It is found in the chloroplast thylakoid membrane. Participates in electron transfer between P700 and the cytochrome b6-f complex in photosystem I. This Rumex obtusifolius (Bitter dock) protein is Plastocyanin (PETE).